Reading from the N-terminus, the 247-residue chain is ATP synthase subunit a, chloroplastic (247 aa).

Helical transmembrane passes span 38-58 (QVLI…IVTV), 95-115 (VPFI…GALL), 134-154 (INTT…AGLS), 199-219 (LVVV…VMFL), and 220-240 (GLFT…AYIG).

The protein belongs to the ATPase A chain family. In terms of assembly, F-type ATPases have 2 components, CF(1) - the catalytic core - and CF(0) - the membrane proton channel. CF(1) has five subunits: alpha(3), beta(3), gamma(1), delta(1), epsilon(1). CF(0) has four main subunits: a, b, b' and c.

Its subcellular location is the plastid. It localises to the chloroplast thylakoid membrane. Functionally, key component of the proton channel; it plays a direct role in the translocation of protons across the membrane. This chain is ATP synthase subunit a, chloroplastic, found in Populus alba (White poplar).